The sequence spans 108 residues: UPF0145 protein LJ_1287 (108 aa).

This sequence belongs to the UPF0145 family.

In Lactobacillus johnsonii (strain CNCM I-12250 / La1 / NCC 533), this protein is UPF0145 protein LJ_1287.